The primary structure comprises 428 residues: UDP-N-acetylglucosamine 1-carboxyvinyltransferase (428 aa).

25–26 (KN) lines the phosphoenolpyruvate pocket. R102 contributes to the UDP-N-acetyl-alpha-D-glucosamine binding site. The Proton donor role is filled by C126. At C126 the chain carries 2-(S-cysteinyl)pyruvic acid O-phosphothioketal. 2 residues coordinate UDP-N-acetyl-alpha-D-glucosamine: D316 and V338.

This sequence belongs to the EPSP synthase family. MurA subfamily.

The protein localises to the cytoplasm. The enzyme catalyses phosphoenolpyruvate + UDP-N-acetyl-alpha-D-glucosamine = UDP-N-acetyl-3-O-(1-carboxyvinyl)-alpha-D-glucosamine + phosphate. It functions in the pathway cell wall biogenesis; peptidoglycan biosynthesis. Its function is as follows. Cell wall formation. Adds enolpyruvyl to UDP-N-acetylglucosamine. In Anaplasma marginale (strain St. Maries), this protein is UDP-N-acetylglucosamine 1-carboxyvinyltransferase.